The primary structure comprises 256 residues: Transmembrane protein 74B (256 aa).

The segment at 1-111 (MPPAQGYEFA…LSLHSEEGPA (111 aa)) is disordered. Low complexity predominate over residues 80 to 96 (RLGSSPSPPGGVSSLPR). Basic and acidic residues predominate over residues 97–108 (SQRDDLSLHSEE). The next 2 membrane-spanning stretches (helical) occupy residues 123-143 (FVSA…AYAI) and 177-197 (IIAG…LLMV).

This sequence belongs to the TMEM74 family.

It is found in the membrane. The sequence is that of Transmembrane protein 74B (TMEM74B) from Homo sapiens (Human).